A 363-amino-acid chain; its full sequence is Probable butyrate kinase (363 aa).

Belongs to the acetokinase family.

The protein resides in the cytoplasm. It carries out the reaction butanoate + ATP = butanoyl phosphate + ADP. The protein is Probable butyrate kinase of Maridesulfovibrio salexigens (strain ATCC 14822 / DSM 2638 / NCIMB 8403 / VKM B-1763) (Desulfovibrio salexigens).